The sequence spans 129 residues: uncharacterized protein (129 aa).

This is an uncharacterized protein from Lepidoptera (butterflies and moths).